Consider the following 402-residue polypeptide: MSRVSQARNLGKYFLLIDNMLVVLGFFVVFPLISIRFVDQMGWAAVMVGIALGLRQFIQQGLGIFGGAIADRFGAKPMIVTGMLMRAAGFATMGIAHEPWLLWFSCLLSGLGGTLFDPPRSALVVKLIRPQQRCRFFSLLMMQDSAGAVIGALLGSWLLQYDFRLVCATGAVLFVLCAAFNAWLLPAWKLSTVRTPVREGMTRVMRDKRFVTYVLTLAGYYMLAVQVMLMLPIMVNDVAGAPSAVKWMYAIEACLSLTLLYPIARWSEKHFRLEHRLMAGLLIMSLSMMPVGMVSGLQQLFTLICLFYIGSIIAEPARETLSALLADARARGSYMGFSRLGLAIGGAIGYIGGGWLFDLGKSAHQPELPWMMLGIIGIFTFLALGWQFSQKRATRRLLERDA.

The Cytoplasmic segment spans residues M1–K12. A helical membrane pass occupies residues Y13–I33. Residues S34–E98 are Periplasmic-facing. Residues P99–F116 form a helical membrane-spanning segment. Residues D117–S138 are Cytoplasmic-facing. Residues L139–L159 form a helical membrane-spanning segment. The Periplasmic portion of the chain corresponds to Q160–R164. A helical membrane pass occupies residues L165 to L185. Over P186–Y213 the chain is Cytoplasmic. A helical transmembrane segment spans residues V214 to M234. Residues V235 to S243 are Periplasmic-facing. A helical membrane pass occupies residues A244–A264. Over R265–R276 the chain is Cytoplasmic. A helical membrane pass occupies residues L277 to L297. At Q298–Q299 the chain is on the periplasmic side. Residues L300–T320 form a helical membrane-spanning segment. The Cytoplasmic segment spans residues L321–R339. Residues L340–G360 traverse the membrane as a helical segment. Residues K361–E367 are Periplasmic-facing. The chain crosses the membrane as a helical span at residues L368 to F388. At S389 to A402 the chain is on the cytoplasmic side.

The protein belongs to the major facilitator superfamily. DHA1 family. MdtH (TC 2.A.1.2.21) subfamily.

It localises to the cell inner membrane. This chain is Multidrug resistance protein MdtH, found in Shigella sonnei (strain Ss046).